Here is a 159-residue protein sequence, read N- to C-terminus: RNA pyrophosphohydrolase (159 aa).

The 144-residue stretch at 6 to 149 (GFRPNVGIIL…KREVYRRALK (144 aa)) folds into the Nudix hydrolase domain. The Nudix box motif lies at 38–59 (GGINPQETPEDALYRELNEEVG).

The protein belongs to the Nudix hydrolase family. RppH subfamily. It depends on a divalent metal cation as a cofactor.

Its function is as follows. Accelerates the degradation of transcripts by removing pyrophosphate from the 5'-end of triphosphorylated RNA, leading to a more labile monophosphorylated state that can stimulate subsequent ribonuclease cleavage. This Pseudomonas savastanoi pv. phaseolicola (strain 1448A / Race 6) (Pseudomonas syringae pv. phaseolicola (strain 1448A / Race 6)) protein is RNA pyrophosphohydrolase.